A 273-amino-acid polypeptide reads, in one-letter code: 2,3,4,5-tetrahydropyridine-2,6-dicarboxylate N-succinyltransferase (273 aa).

Arg-104 and Asp-141 together coordinate substrate.

It belongs to the transferase hexapeptide repeat family. As to quaternary structure, homotrimer.

Its subcellular location is the cytoplasm. The enzyme catalyses (S)-2,3,4,5-tetrahydrodipicolinate + succinyl-CoA + H2O = (S)-2-succinylamino-6-oxoheptanedioate + CoA. The protein operates within amino-acid biosynthesis; L-lysine biosynthesis via DAP pathway; LL-2,6-diaminopimelate from (S)-tetrahydrodipicolinate (succinylase route): step 1/3. The polypeptide is 2,3,4,5-tetrahydropyridine-2,6-dicarboxylate N-succinyltransferase (Chromobacterium violaceum (strain ATCC 12472 / DSM 30191 / JCM 1249 / CCUG 213 / NBRC 12614 / NCIMB 9131 / NCTC 9757 / MK)).